The following is a 416-amino-acid chain: NADH-quinone oxidoreductase subunit D (416 aa).

The protein belongs to the complex I 49 kDa subunit family. In terms of assembly, NDH-1 is composed of 14 different subunits. Subunits NuoB, C, D, E, F, and G constitute the peripheral sector of the complex.

The protein localises to the cell inner membrane. The enzyme catalyses a quinone + NADH + 5 H(+)(in) = a quinol + NAD(+) + 4 H(+)(out). Its function is as follows. NDH-1 shuttles electrons from NADH, via FMN and iron-sulfur (Fe-S) centers, to quinones in the respiratory chain. The immediate electron acceptor for the enzyme in this species is believed to be ubiquinone. Couples the redox reaction to proton translocation (for every two electrons transferred, four hydrogen ions are translocated across the cytoplasmic membrane), and thus conserves the redox energy in a proton gradient. This chain is NADH-quinone oxidoreductase subunit D, found in Caulobacter sp. (strain K31).